Consider the following 118-residue polypeptide: UPF0102 protein STH1475 (118 aa).

It belongs to the UPF0102 family.

This is UPF0102 protein STH1475 from Symbiobacterium thermophilum (strain DSM 24528 / JCM 14929 / IAM 14863 / T).